A 189-amino-acid polypeptide reads, in one-letter code: Ribulose bisphosphate carboxylase small subunit, chloroplastic (189 aa).

The transit peptide at methionine 1–arginine 66 directs the protein to the chloroplast.

Belongs to the RuBisCO small chain family. Heterohexadecamer of 8 large and 8 small subunits.

The protein resides in the plastid. Its subcellular location is the chloroplast. In terms of biological role, ruBisCO catalyzes two reactions: the carboxylation of D-ribulose 1,5-bisphosphate, the primary event in carbon dioxide fixation, as well as the oxidative fragmentation of the pentose substrate. Both reactions occur simultaneously and in competition at the same active site. Although the small subunit is not catalytic it is essential for maximal activity. The protein is Ribulose bisphosphate carboxylase small subunit, chloroplastic of Larix laricina (Tamarack).